A 290-amino-acid chain; its full sequence is 33 kDa chaperonin (290 aa).

Disulfide bonds link C235–C237 and C268–C271.

The protein belongs to the HSP33 family. Post-translationally, under oxidizing conditions two disulfide bonds are formed involving the reactive cysteines. Under reducing conditions zinc is bound to the reactive cysteines and the protein is inactive.

The protein localises to the cytoplasm. Redox regulated molecular chaperone. Protects both thermally unfolding and oxidatively damaged proteins from irreversible aggregation. Plays an important role in the bacterial defense system toward oxidative stress. This Streptococcus pneumoniae serotype 19F (strain G54) protein is 33 kDa chaperonin.